The chain runs to 1230 residues: SAM and SH3 domain-containing protein 1 (1230 aa).

Over residues 1-10 (MEEDAGAASP) the composition is skewed to low complexity. A disordered region spans residues 1–30 (MEEDAGAASPAPEPEPEVDPARELEPEAGV). Residues Ser83 and Ser241 each carry the phosphoserine modification. Disordered regions lie at residues 211 to 249 (RQSS…EDSV) and 275 to 337 (KKPS…LDTW). Residues 275 to 297 (KKPSAEGGEEHVFENSPVQDERS) are compositionally biased toward basic and acidic residues. Over residues 324–336 (SLTPSPSSSSLDT) the composition is skewed to low complexity. Residue Ser400 is modified to Phosphoserine. Disordered regions lie at residues 439–566 (PRIS…YDTD), 610–633 (EEKP…SVED), and 705–792 (VDNQ…KSCD). The span at 461–470 (KYSSPVSEQD) shows a compositional bias: polar residues. Positions 485 to 494 (PDSEHVDKPK) are enriched in basic and acidic residues. Residues 498–516 (GGSVESLRSSLSGQSSMSG) show a composition bias toward low complexity. Over residues 517-529 (QTVSTTDSSTSNR) the composition is skewed to polar residues. The SH3 domain maps to 547–608 (PFCGRARVHT…KFIYVDVLNE (62 aa)). Over residues 615–624 (RPTRRRKKGR) the composition is skewed to basic residues. Residues 626-690 (SQPKSVEDLL…LTAVELLQEY (65 aa)) enclose the SAM 1 domain. Over residues 737–758 (VLSTKSSTESNLKSFTRSQPGN) the composition is skewed to polar residues. Over residues 768-779 (GEVRKQGEEGRL) the composition is skewed to basic and acidic residues. Residues Ser813 and Ser831 each carry the phosphoserine modification. Disordered stretches follow at residues 818–875 (EGPE…LPRG) and 915–1045 (PPQC…PWLA). Residues 844-852 (NVPTEMPET) form a required for interaction with TRAF6 region. Residues 852–868 (TCSQNVPEVPQKTSACT) are compositionally biased toward polar residues. Basic and acidic residues predominate over residues 940 to 956 (GLRKGHDHHPLGTKEGV). Over residues 962 to 972 (APETRTQSRHP) the composition is skewed to polar residues. Over residues 1008–1019 (SPASPVSPSDCP) the composition is skewed to low complexity. Residues 1160–1224 (GCVASMSDWL…ITAARLFKLP (65 aa)) form the SAM 2 domain.

Interacts with GNAS. Interacts with IQGAP1. Interacts with TRAF6 (via C-terminus); the interaction is LPS-dependent. Interacts with MAP3K7, CHUK and IKBKB. As to expression, expressed in the microvascular endothelium of various organs, as well as in parenchymal cells. Expressed in the endothelium but not lymphoid cells of spleen and thymus.

Its subcellular location is the cytoplasm. Is a positive regulator of NF-kappa-B signaling downstream of TLR4 activation. It acts as a scaffold molecule to assemble a molecular complex that includes TRAF6, MAP3K7, CHUK and IKBKB, thereby facilitating NF-kappa-B signaling activation. Regulates TRAF6 and MAP3K7 ubiquitination. Involved in the regulation of cell mobility. Regulates lipolysaccharide (LPS)-induced endothelial cell migration. Is involved in the regulation of skin pigmentation through the control of melanocyte migration in the epidermis. The polypeptide is SAM and SH3 domain-containing protein 1 (Sash1) (Mus musculus (Mouse)).